The chain runs to 123 residues: Protein Wnt-7 (123 aa).

Ser-1 carries O-palmitoleoyl serine; by PORCN lipidation. Residues Asn-79 and Asn-90 are each glycosylated (N-linked (GlcNAc...) asparagine). Cys-89 and Cys-104 are joined by a disulfide.

Belongs to the Wnt family. In terms of processing, palmitoleoylation is required for efficient binding to frizzled receptors. Depalmitoleoylation leads to Wnt signaling pathway inhibition.

It is found in the secreted. The protein localises to the extracellular space. Its subcellular location is the extracellular matrix. Functionally, ligand for members of the frizzled family of seven transmembrane receptors. Probable developmental protein. May be a signaling molecule which affects the development of discrete regions of tissues. Is likely to signal over only few cell diameters. In Strongylocentrotus purpuratus (Purple sea urchin), this protein is Protein Wnt-7 (WNT-7).